We begin with the raw amino-acid sequence, 206 residues long: Pyridoxine/pyridoxamine 5'-phosphate oxidase (206 aa).

Residues 53–58 (RMVLLK), 68–69 (YT), K75, and Q97 contribute to the FMN site. Substrate is bound at residue K58. Substrate-binding residues include Y115, R119, and S123. Residues 132–133 (QS) and W177 contribute to the FMN site. 183 to 185 (RLH) lines the substrate pocket. R187 is an FMN binding site.

Belongs to the pyridoxamine 5'-phosphate oxidase family. Homodimer. FMN serves as cofactor.

The enzyme catalyses pyridoxamine 5'-phosphate + O2 + H2O = pyridoxal 5'-phosphate + H2O2 + NH4(+). It carries out the reaction pyridoxine 5'-phosphate + O2 = pyridoxal 5'-phosphate + H2O2. The protein operates within cofactor metabolism; pyridoxal 5'-phosphate salvage; pyridoxal 5'-phosphate from pyridoxamine 5'-phosphate: step 1/1. It functions in the pathway cofactor metabolism; pyridoxal 5'-phosphate salvage; pyridoxal 5'-phosphate from pyridoxine 5'-phosphate: step 1/1. Catalyzes the oxidation of either pyridoxine 5'-phosphate (PNP) or pyridoxamine 5'-phosphate (PMP) into pyridoxal 5'-phosphate (PLP). In Rhizobium etli (strain CIAT 652), this protein is Pyridoxine/pyridoxamine 5'-phosphate oxidase.